The primary structure comprises 732 residues: Phosphoribosylformylglycinamidine synthase subunit PurL (732 aa).

The active site involves histidine 32. Tyrosine 35 is a binding site for ATP. Residue glutamate 81 coordinates Mg(2+). Substrate-binding positions include 82–85 (SHNH) and arginine 104. The active-site Proton acceptor is histidine 83. Aspartate 105 is a binding site for Mg(2+). Glutamine 230 contributes to the substrate binding site. Residue aspartate 258 participates in Mg(2+) binding. 302–304 (ESQ) is a binding site for substrate. ATP-binding residues include aspartate 485 and glycine 522. Residue asparagine 523 participates in Mg(2+) binding. Substrate is bound at residue serine 525.

This sequence belongs to the FGAMS family. As to quaternary structure, monomer. Part of the FGAM synthase complex composed of 1 PurL, 1 PurQ and 2 PurS subunits.

It localises to the cytoplasm. The enzyme catalyses N(2)-formyl-N(1)-(5-phospho-beta-D-ribosyl)glycinamide + L-glutamine + ATP + H2O = 2-formamido-N(1)-(5-O-phospho-beta-D-ribosyl)acetamidine + L-glutamate + ADP + phosphate + H(+). It participates in purine metabolism; IMP biosynthesis via de novo pathway; 5-amino-1-(5-phospho-D-ribosyl)imidazole from N(2)-formyl-N(1)-(5-phospho-D-ribosyl)glycinamide: step 1/2. Its function is as follows. Part of the phosphoribosylformylglycinamidine synthase complex involved in the purines biosynthetic pathway. Catalyzes the ATP-dependent conversion of formylglycinamide ribonucleotide (FGAR) and glutamine to yield formylglycinamidine ribonucleotide (FGAM) and glutamate. The FGAM synthase complex is composed of three subunits. PurQ produces an ammonia molecule by converting glutamine to glutamate. PurL transfers the ammonia molecule to FGAR to form FGAM in an ATP-dependent manner. PurS interacts with PurQ and PurL and is thought to assist in the transfer of the ammonia molecule from PurQ to PurL. This is Phosphoribosylformylglycinamidine synthase subunit PurL from Methanococcus aeolicus (strain ATCC BAA-1280 / DSM 17508 / OCM 812 / Nankai-3).